The following is a 509-amino-acid chain: Membrane-bound lytic murein transglycosylase F (509 aa).

The N-terminal stretch at 1–40 is a signal peptide; it reads MLASACTHSWRTGRFLNRIIKSSVQTLTAAALIANLSACS. Positions 41–280 are non-LT domain; it reads RPTTLEKIEQ…YLQERYFGHV (240 aa). The segment at 281–509 is LT domain; that stretch reads NQLNYVGART…APFRVTPPML (229 aa). Glu-327 is a catalytic residue. Residues 474–500 form a disordered region; that stretch reads DGSVAQNEDAPTTGADGTTEETPAIPA.

This sequence in the N-terminal section; belongs to the bacterial solute-binding protein 3 family. The protein in the C-terminal section; belongs to the transglycosylase Slt family.

The protein localises to the cell outer membrane. The enzyme catalyses Exolytic cleavage of the (1-&gt;4)-beta-glycosidic linkage between N-acetylmuramic acid (MurNAc) and N-acetylglucosamine (GlcNAc) residues in peptidoglycan, from either the reducing or the non-reducing ends of the peptidoglycan chains, with concomitant formation of a 1,6-anhydrobond in the MurNAc residue.. Functionally, murein-degrading enzyme that degrades murein glycan strands and insoluble, high-molecular weight murein sacculi, with the concomitant formation of a 1,6-anhydromuramoyl product. Lytic transglycosylases (LTs) play an integral role in the metabolism of the peptidoglycan (PG) sacculus. Their lytic action creates space within the PG sacculus to allow for its expansion as well as for the insertion of various structures such as secretion systems and flagella. The sequence is that of Membrane-bound lytic murein transglycosylase F from Hahella chejuensis (strain KCTC 2396).